The primary structure comprises 158 residues: Regulator of G-protein signaling 13 (158 aa).

Positions 34–150 (SLESLMATKY…LKSEMYQQLL (117 aa)) constitute an RGS domain.

In terms of biological role, inhibits signal transduction by increasing the GTPase activity of G protein alpha subunits thereby driving them into their inactive GDP-bound form. Binds to both G(i)-alpha and G(q)-alpha. The chain is Regulator of G-protein signaling 13 (Rgs13) from Mus musculus (Mouse).